Here is a 283-residue protein sequence, read N- to C-terminus: MAPAMKIVFGLLTFVTVGMVIGSLLQLAFINRLEDSYGTGFPSLRGLRGQNTRYLRDVSRWANDKDAELLRIGNVKPEVVSWSPRIIVLHDFLSPEECEYLKAIARPRLQVSTVVDVKTGKGVKSDVRTSSGMFLTHVERSYPIIQAIEKRIAVFSQVPAENGELIQVLRYEPQQFYKPHHDYFADTFNLKRGGQRVATMLMYLTDDVEGGETYFPLAGDGDCTCGGKIMKGISVKPTKGDAVLFWSMGLDGQSDPRSIHGGCEVLSGEKWSATKWMRQKATS.

The Cytoplasmic segment spans residues 1 to 6; that stretch reads MAPAMK. A helical; Signal-anchor for type II membrane protein membrane pass occupies residues 7–27; it reads IVFGLLTFVTVGMVIGSLLQL. Residues 28 to 283 lie on the Lumenal side of the membrane; that stretch reads AFINRLEDSY…TKWMRQKATS (256 aa). The Fe2OG dioxygenase domain maps to 162 to 279; the sequence is NGELIQVLRY…KWSATKWMRQ (118 aa). 3 residues coordinate Fe cation: histidine 180, aspartate 182, and histidine 260. Position 270 (lysine 270) interacts with 2-oxoglutarate.

This sequence belongs to the P4HA family. Requires Fe(2+) as cofactor. The cofactor is L-ascorbate.

The protein resides in the endoplasmic reticulum membrane. It catalyses the reaction L-prolyl-[collagen] + 2-oxoglutarate + O2 = trans-4-hydroxy-L-prolyl-[collagen] + succinate + CO2. Functionally, catalyzes the post-translational formation of 4-hydroxyproline in -Xaa-Pro-Gly- sequences in proline-rich peptide sequences of plant glycoproteins and other proteins. Hydroxylates preferentially prolines in second positions in the -Pro-Pro-Gly-triplets. Hydroxyprolines are important constituent of many plant cell wall glycoproteins such as extensins, hydroxyproline-rich glycoproteins, lectins and arabinogalactan proteins. Can hydroxylate collagen-like peptides and hypoxia-inducible transcription factor peptides. The polypeptide is Prolyl 4-hydroxylase 1 (Arabidopsis thaliana (Mouse-ear cress)).